The sequence spans 346 residues: Protein RecA (346 aa).

68 to 75 contacts ATP; sequence GPESSGKT.

This sequence belongs to the RecA family.

It localises to the cytoplasm. Can catalyze the hydrolysis of ATP in the presence of single-stranded DNA, the ATP-dependent uptake of single-stranded DNA by duplex DNA, and the ATP-dependent hybridization of homologous single-stranded DNAs. It interacts with LexA causing its activation and leading to its autocatalytic cleavage. The sequence is that of Protein RecA from Heliobacterium modesticaldum (strain ATCC 51547 / Ice1).